Here is a 174-residue protein sequence, read N- to C-terminus: NAD(P)H-quinone oxidoreductase subunit J, chloroplastic (174 aa).

It belongs to the complex I 30 kDa subunit family. In terms of assembly, NDH is composed of at least 16 different subunits, 5 of which are encoded in the nucleus.

It is found in the plastid. The protein localises to the chloroplast thylakoid membrane. It catalyses the reaction a plastoquinone + NADH + (n+1) H(+)(in) = a plastoquinol + NAD(+) + n H(+)(out). The catalysed reaction is a plastoquinone + NADPH + (n+1) H(+)(in) = a plastoquinol + NADP(+) + n H(+)(out). Its function is as follows. NDH shuttles electrons from NAD(P)H:plastoquinone, via FMN and iron-sulfur (Fe-S) centers, to quinones in the photosynthetic chain and possibly in a chloroplast respiratory chain. The immediate electron acceptor for the enzyme in this species is believed to be plastoquinone. Couples the redox reaction to proton translocation, and thus conserves the redox energy in a proton gradient. This chain is NAD(P)H-quinone oxidoreductase subunit J, chloroplastic, found in Mesostigma viride (Green alga).